A 226-amino-acid polypeptide reads, in one-letter code: Cytidylate kinase (226 aa).

10–18 (GPASSGKST) contacts ATP.

It belongs to the cytidylate kinase family. Type 1 subfamily.

It localises to the cytoplasm. The catalysed reaction is CMP + ATP = CDP + ADP. It catalyses the reaction dCMP + ATP = dCDP + ADP. The polypeptide is Cytidylate kinase (Streptococcus thermophilus (strain ATCC BAA-491 / LMD-9)).